The following is a 1319-amino-acid chain: MNRRYVLSLSGALLASSCMTVLVAVPVARAQQASTAMTTAATSATAAPRQILLQQARFWLQQQQYDNARQALQNAERIAPNSPDVLEVLGEYQTAIGNREAAADTLRHLQQVAPGSAAAGNLNDLLSERAISQSDLSQIRSLAGSGQNAQAVAGYQKLFHGGKPPHSLAVEYYQTMAGVPAQWDQARAGLAGVVASNPQDYRAQLAFAQALTYNTSTRMEGLTRLKDLQSFRSQAPVEAAAAAQSYRQTLSWLPVNPETQPLMEQWLSAHPNDTALREHMLHPPGGPPDKAGLARQAGYQQLNAGRLAAAEQSFQSALQINSHDADSLGGMGLVSMRQGDTAEARRYFEEAMAADPKTADRWRPALAGMAVSGEYASVRQLIAAHQYTEAKQQLATLARQPGQYTGATLMLADLQRSTGQIAAAEQEYRGILSREPNNQLALMGLARVDMAQGNTAEARQLLSRVGPQYASQVGEIEVSGLMAAASQTSDSARKVSILREAMAQAPRDPWVRINLANALQQQGDVAEAGRVMQPILANPVTAQDRQAGILYTYGSGNDAMTRQLLAGLSPADYSPAIRSIAEEMEIKQDLASRLSMVSNPVPLIREALTQPDPTGARGVAVADLFRQRGDMVHARMALRIASTRTIDLSPDQRLSYATEYMKISNPVAAARLLAPLGDGTGSATGSALLPEQVQTLQQLRMGISVAQSDLLNQRGDQAQAYDHLAPALQADPEATSPKLALARLYNGHGKPGKALEIDLAVLRHNPQDLDARQAAVQAAVNSDHNSLATRLAMDGVQESPMDARAWLAMAVADQADGHGQRTIEDLRRAYDLRLQQVEGTRAASGAGAAQEDALAPPSTNPFRPRGYGHQTELGAPVTGGSYSAEAASPDTSDQMLSSIAGQIRTLRENLAPSIDGGLGFRSRSGEHGMGRLTEANIPIVGRLPLQAGASALTFSITPTMIWSGNLNTGSVYDVPRYGTMMGVQAYNQYDSYTNAGRDQQRIAAGTAEAGFAPDVQFGNSWVRADVGASPIGFPITNVLGGVEFSPRVGPVTFRVSAERRSITNSVLSYGGLRDTNYNSALGRYARQVYGQALSKQWGSEWGGVVTNHFHGQVEATLGNTILYGGGGYAIQTGKNVQRNSEREAGIGANTLVWHNANMLVRIGVSLTYFGYAKNEDFYTYGQGGYFSPQSYYAATVPVRYAGQHKRLDWDVTGSVGYQVFHEHSAPFFPTSSLLQSGANTIASNYSASATPAEYLSEETVNSAYYPGDSIAGLTGGFNARVGYRFTRNVRLDLSGRYQKAGNWTESGAMISAHYLIMDQ.

The N-terminal stretch at 1 to 46 (MNRRYVLSLSGALLASSCMTVLVAVPVARAQQASTAMTTAATSATA) is a signal peptide. TPR repeat units lie at residues 49-82 (RQIL…APNS), 84-116 (DVLE…APGS), 291-324 (AGLA…NSHD), 325-358 (ADSL…DPKT), 405-438 (TGAT…EPNN), 557-590 (NDAM…KQDL), 701-734 (MGIS…DPEA), and 736-768 (SPKL…NPQD). A compositionally biased stretch (low complexity) spans 841 to 855 (RAASGAGAAQEDALA). Positions 841-890 (RAASGAGAAQEDALAPPSTNPFRPRGYGHQTELGAPVTGGSYSAEAASPD) are disordered. A TPR 9 repeat occupies 1059–1094 (RRSITNSVLSYGGLRDTNYNSALGRYARQVYGQALS).

It belongs to the AcsC/BcsC family.

Its subcellular location is the cell outer membrane. Its pathway is glycan metabolism; bacterial cellulose biosynthesis. Required for maximal bacterial cellulose synthesis. It may be involved in the formation of a membrane complex for extrusion of the cellulose product. This Komagataeibacter xylinus (Gluconacetobacter xylinus) protein is Cellulose synthase operon protein C (bcsC).